Reading from the N-terminus, the 200-residue chain is ATP-dependent Clp protease proteolytic subunit (200 aa).

The active-site Nucleophile is the serine 103. Histidine 128 is an active-site residue.

The protein belongs to the peptidase S14 family. Fourteen ClpP subunits assemble into 2 heptameric rings which stack back to back to give a disk-like structure with a central cavity, resembling the structure of eukaryotic proteasomes.

It localises to the cytoplasm. It carries out the reaction Hydrolysis of proteins to small peptides in the presence of ATP and magnesium. alpha-casein is the usual test substrate. In the absence of ATP, only oligopeptides shorter than five residues are hydrolyzed (such as succinyl-Leu-Tyr-|-NHMec, and Leu-Tyr-Leu-|-Tyr-Trp, in which cleavage of the -Tyr-|-Leu- and -Tyr-|-Trp bonds also occurs).. Its function is as follows. Cleaves peptides in various proteins in a process that requires ATP hydrolysis. Has a chymotrypsin-like activity. Plays a major role in the degradation of misfolded proteins. The protein is ATP-dependent Clp protease proteolytic subunit of Vibrio cholerae serotype O1 (strain ATCC 39541 / Classical Ogawa 395 / O395).